Consider the following 389-residue polypeptide: Apoptosis inhibitor U19 (389 aa).

It belongs to the beta-herpesvirinae UL38 protein family. In terms of assembly, interacts with host MDM2; this interaction leads to the stabilization of host TP53.

The protein localises to the host cytoplasm. Its subcellular location is the host nucleus. Functionally, plays a role in the inhibition of host apoptosis to facilitate efficient viral replication. Promotes stabilization and inactivation of host TP53 through interaction with host MDM2. The sequence is that of Apoptosis inhibitor U19 (U19) from Human herpesvirus 6A (strain Uganda-1102) (HHV-6 variant A).